A 178-amino-acid chain; its full sequence is Large ribosomal subunit protein uL6 (178 aa).

This sequence belongs to the universal ribosomal protein uL6 family. Part of the 50S ribosomal subunit.

Its function is as follows. This protein binds to the 23S rRNA, and is important in its secondary structure. It is located near the subunit interface in the base of the L7/L12 stalk, and near the tRNA binding site of the peptidyltransferase center. This is Large ribosomal subunit protein uL6 from Nitratiruptor sp. (strain SB155-2).